Reading from the N-terminus, the 283-residue chain is Bifunctional protein FolD (283 aa).

NADP(+) is bound by residues 164 to 166, Ile189, and Ile230; that span reads GSS.

This sequence belongs to the tetrahydrofolate dehydrogenase/cyclohydrolase family. In terms of assembly, homodimer.

It catalyses the reaction (6R)-5,10-methylene-5,6,7,8-tetrahydrofolate + NADP(+) = (6R)-5,10-methenyltetrahydrofolate + NADPH. It carries out the reaction (6R)-5,10-methenyltetrahydrofolate + H2O = (6R)-10-formyltetrahydrofolate + H(+). The protein operates within one-carbon metabolism; tetrahydrofolate interconversion. Its function is as follows. Catalyzes the oxidation of 5,10-methylenetetrahydrofolate to 5,10-methenyltetrahydrofolate and then the hydrolysis of 5,10-methenyltetrahydrofolate to 10-formyltetrahydrofolate. The chain is Bifunctional protein FolD from Fusobacterium nucleatum subsp. nucleatum (strain ATCC 25586 / DSM 15643 / BCRC 10681 / CIP 101130 / JCM 8532 / KCTC 2640 / LMG 13131 / VPI 4355).